The chain runs to 208 residues: Uridine kinase (208 aa).

12–19 (GGSGGGKT) is a binding site for ATP.

The protein belongs to the uridine kinase family.

The protein localises to the cytoplasm. It catalyses the reaction uridine + ATP = UMP + ADP + H(+). It carries out the reaction cytidine + ATP = CMP + ADP + H(+). It functions in the pathway pyrimidine metabolism; CTP biosynthesis via salvage pathway; CTP from cytidine: step 1/3. It participates in pyrimidine metabolism; UMP biosynthesis via salvage pathway; UMP from uridine: step 1/1. This Streptococcus pyogenes serotype M3 (strain ATCC BAA-595 / MGAS315) protein is Uridine kinase.